A 559-amino-acid chain; its full sequence is Heterochromatin protein 1-binding protein 3 (559 aa).

Residues 1–132 are disordered; that stretch reads MATDLSEAEP…SKEKEKKVKK (132 aa). 2 stretches are compositionally biased toward basic and acidic residues: residues 51 to 68 and 96 to 128; these read TPPKSKPAEGGEEVKADA and EQPKEPENEEKGETKSSVETKKDDKDQSKEKEK. 3 H15 domains span residues 158 to 233, 256 to 331, and 339 to 414; these read SRPK…VVVS, QQVK…QLKK, and GGTL…QLCF. A PxVxL motif motif is present at residues 256–260; that stretch reads QQVKL. The interval 421 to 559 is disordered; the sequence is DVLYPEKQQD…AMRKSLRAKK (139 aa). The segment covering 429 to 459 has biased composition (acidic residues); the sequence is QDEDSEESQEEEEEESEEEEESEEEESEEEE. Basic residues predominate over residues 463–515; that stretch reads KKRMQKRPPPKSRSRAPPMKRRESKPKPRKTPAAHQGKAKPPPKVKTPVKKAK. Positions 516–533 are enriched in low complexity; it reads PAAPAIKKPSGGSSSKKP. The segment covering 549–559 has biased composition (basic residues); that stretch reads SAMRKSLRAKK.

Its subcellular location is the nucleus. The protein localises to the chromosome. Component of heterochromatin that maintains heterochromatin integrity during G1/S progression and regulates the duration of G1 phase to critically influence cell proliferative capacity. The protein is Heterochromatin protein 1-binding protein 3 (HP1BP3) of Gallus gallus (Chicken).